Here is a 141-residue protein sequence, read N- to C-terminus: Hemoglobin subunit alpha (141 aa).

The 141-residue stretch at Val-1–Arg-141 folds into the Globin domain. Position 3 is a phosphoserine (Ser-3). N6-succinyllysine is present on residues Lys-7 and Lys-11. Lys-16 is subject to N6-acetyllysine; alternate. N6-succinyllysine; alternate is present on Lys-16. Tyr-24 is modified (phosphotyrosine). Ser-35 bears the Phosphoserine mark. The residue at position 40 (Lys-40) is an N6-succinyllysine. Ser-49 bears the Phosphoserine mark. His-58 serves as a coordination point for O2. His-87 serves as a coordination point for heme b. Ser-102 is subject to Phosphoserine. Thr-108 carries the phosphothreonine modification. Residues Ser-124 and Ser-131 each carry the phosphoserine modification. Residues Thr-134 and Thr-137 each carry the phosphothreonine modification. Ser-138 bears the Phosphoserine mark.

This sequence belongs to the globin family. As to quaternary structure, heterotetramer of two alpha chains and two beta chains. Red blood cells.

Functionally, involved in oxygen transport from the lung to the various peripheral tissues. Its function is as follows. Hemopressin acts as an antagonist peptide of the cannabinoid receptor CNR1. Hemopressin-binding efficiently blocks cannabinoid receptor CNR1 and subsequent signaling. This is Hemoglobin subunit alpha (HBA) from Meles meles (Eurasian badger).